The primary structure comprises 691 residues: DNA ligase (691 aa).

Residues 1–22 (MTTAEDVAGNPYISDPRTDFES) form a disordered region. Residues 59–63 (DRAYD), 107–108 (SI), and Glu-137 each bind NAD(+). The N6-AMP-lysine intermediate role is filled by Lys-139. NAD(+)-binding residues include Arg-160, Glu-196, Lys-311, and Lys-335. Residues Cys-426, Cys-429, Cys-442, and Cys-448 each contribute to the Zn(2+) site. One can recognise a BRCT domain in the interval 608–691 (TDGDALDGQT…EELLDDAGVL (84 aa)). The interval 637 to 667 (ERNDGSATSSVSGNTDYLVLGDNPGQRKQDD) is disordered. The segment covering 641 to 651 (GSATSSVSGNT) has biased composition (polar residues).

Belongs to the NAD-dependent DNA ligase family. LigA subfamily. Mg(2+) is required as a cofactor. It depends on Mn(2+) as a cofactor.

It carries out the reaction NAD(+) + (deoxyribonucleotide)n-3'-hydroxyl + 5'-phospho-(deoxyribonucleotide)m = (deoxyribonucleotide)n+m + AMP + beta-nicotinamide D-nucleotide.. Functionally, DNA ligase that catalyzes the formation of phosphodiester linkages between 5'-phosphoryl and 3'-hydroxyl groups in double-stranded DNA using NAD as a coenzyme and as the energy source for the reaction. It is essential for DNA replication and repair of damaged DNA. This Haloarcula marismortui (strain ATCC 43049 / DSM 3752 / JCM 8966 / VKM B-1809) (Halobacterium marismortui) protein is DNA ligase.